The sequence spans 118 residues: ISQYITKAQGFFNQAIYWTKVTVEVSKQIYIREGLAPPSVAEIQQVYQGLYKKALEFAAQPKTSADGLIKVAKSLSKEEYLRFGAYFIQIVGLFSLGEIIGRRQIVGYPSFGPKEHHH.

As to quaternary structure, F-type ATP synthases have 2 components, the catalytic core F(1) and the membrane-embedded component F(0), linked together by a central stalk and a peripheral stalk. The central stalk, also called rotor shaft, is often seen as part of F(1). The peripheral stalk is seen as part of F(0). F(0) contains the membrane channel next to the rotor. F-type ATP synthases form dimers but each monomer functions independently in ATP generation. The dimer consists of 18 different polypeptides: ATP1 (subunit alpha, part of F(1), 3 molecules per monomer), ATP2 (subunit beta, part of F(1), 3 molecules per monomer), ATP3 (subunit gamma, part of the central stalk), ATP4 (subunit b, part of the peripheral stalk), ATP5/OSCP (subunit 5/OSCP, part of the peripheral stalk), ATP6 (subunit a, part of the peripheral stalk), ATP7 (subunit d, part of the peripheral stalk), ATP8 (subunit 8, part of the peripheral stalk), OLI1 (subunit c, part of the rotor, 10 molecules per monomer), ATP14 (subunit h, part of the peripheral stalk), ATP15 (subunit epsilon, part of the central stalk), ATP16 (subunit delta, part of the central stalk), ATP17 (subunit f, part of the peripheral stalk), ATP18 (subunit i/j, part of the peripheral stalk). Dimer-specific subunits are ATP19 (subunit k, at interface between monomers), ATP20 (subunit g, at interface between monomers), TIM11 (subunit e, at interface between monomers). Also contains subunit L.

The protein localises to the mitochondrion inner membrane. Mitochondrial membrane ATP synthase (F(1)F(0) ATP synthase or Complex V) produces ATP from ADP in the presence of a proton gradient across the membrane which is generated by electron transport complexes of the respiratory chain. F-type ATP synthases consist of two structural domains, F(1) - containing the extramembraneous catalytic core, and F(0) - containing the membrane proton channel, linked together by a central stalk and a peripheral stalk. During catalysis, ATP synthesis in the catalytic domain of F(1) is coupled via a rotary mechanism of the central stalk subunits to proton translocation. Part of the complex F(0) domain Minor subunit located with subunit a/ATP6 in the membrane. Together with subunit e/TIM11, probably contributes to membrane curvature at the site of the ATP synthase dimer, ultimately contributing to formation of cristae. In Pichia angusta (Yeast), this protein is ATP synthase subunit g, mitochondrial.